A 283-amino-acid polypeptide reads, in one-letter code: Thymidylate synthase (283 aa).

Arginine 22 contributes to the dUMP binding site. Cysteine 160 functions as the Nucleophile in the catalytic mechanism. DUMP contacts are provided by residues 180 to 183 (RSCD), asparagine 191, and 221 to 223 (HIY). Aspartate 183 contributes to the (6R)-5,10-methylene-5,6,7,8-tetrahydrofolate binding site. Serine 282 contacts (6R)-5,10-methylene-5,6,7,8-tetrahydrofolate.

Belongs to the thymidylate synthase family. Bacterial-type ThyA subfamily. In terms of assembly, homodimer.

The protein localises to the cytoplasm. It carries out the reaction dUMP + (6R)-5,10-methylene-5,6,7,8-tetrahydrofolate = 7,8-dihydrofolate + dTMP. The protein operates within pyrimidine metabolism; dTTP biosynthesis. Catalyzes the reductive methylation of 2'-deoxyuridine-5'-monophosphate (dUMP) to 2'-deoxythymidine-5'-monophosphate (dTMP) while utilizing 5,10-methylenetetrahydrofolate (mTHF) as the methyl donor and reductant in the reaction, yielding dihydrofolate (DHF) as a by-product. This enzymatic reaction provides an intracellular de novo source of dTMP, an essential precursor for DNA biosynthesis. This Shewanella piezotolerans (strain WP3 / JCM 13877) protein is Thymidylate synthase.